A 344-amino-acid polypeptide reads, in one-letter code: Centromere protein L (344 aa).

Residues 1-32 (MAGGRPAGSAIEMEGAMRTLPSSGRPSGTGWQ) form a disordered region. Residues 20-32 (LPSSGRPSGTGWQ) are compositionally biased toward polar residues.

This sequence belongs to the CENP-L/IML3 family. Component of the CENPA-HI complex, at least composed of CENPH, CENPI, CENPK, CENPL, CENPM, CENPO and CENPP.

It is found in the nucleus. The protein resides in the chromosome. The protein localises to the centromere. Component of the CENPA-HI complex, a centromeric complex involved in assembly of kinetochore proteins, mitotic progression and chromosome segregation. This is Centromere protein L (CENPL) from Gallus gallus (Chicken).